The following is a 217-amino-acid chain: tRNA (guanine-N(7)-)-methyltransferase (217 aa).

Positions 43, 68, 101, and 123 each coordinate S-adenosyl-L-methionine. A substrate-binding site is contributed by K127. Residues 129-134 (RHNKRR) are interaction with RNA. Substrate is bound by residues D159 and 196–199 (TEYE).

Belongs to the class I-like SAM-binding methyltransferase superfamily. TrmB family.

It catalyses the reaction guanosine(46) in tRNA + S-adenosyl-L-methionine = N(7)-methylguanosine(46) in tRNA + S-adenosyl-L-homocysteine. Its pathway is tRNA modification; N(7)-methylguanine-tRNA biosynthesis. Functionally, catalyzes the formation of N(7)-methylguanine at position 46 (m7G46) in tRNA. The polypeptide is tRNA (guanine-N(7)-)-methyltransferase (Clostridium botulinum (strain Langeland / NCTC 10281 / Type F)).